The sequence spans 764 residues: 5-methyltetrahydropteroyltriglutamate--homocysteine methyltransferase (764 aa).

Residues 16–19 and Lys115 each bind 5-methyltetrahydropteroyltri-L-glutamate; that span reads RELK. Residues 435–437 and Glu488 each bind L-homocysteine; that span reads IGS. L-methionine is bound by residues 435–437 and Glu488; that span reads IGS. 5-methyltetrahydropteroyltri-L-glutamate is bound by residues 519–520 and Trp565; that span reads RC. Position 603 (Asp603) interacts with L-homocysteine. Asp603 contacts L-methionine. Position 609 (Glu609) interacts with 5-methyltetrahydropteroyltri-L-glutamate. Residues His645, Cys647, and Glu669 each contribute to the Zn(2+) site. The active-site Proton donor is His698. Position 730 (Cys730) interacts with Zn(2+).

The protein belongs to the vitamin-B12 independent methionine synthase family. The cofactor is Zn(2+).

It carries out the reaction 5-methyltetrahydropteroyltri-L-glutamate + L-homocysteine = tetrahydropteroyltri-L-glutamate + L-methionine. The protein operates within amino-acid biosynthesis; L-methionine biosynthesis via de novo pathway; L-methionine from L-homocysteine (MetE route): step 1/1. Catalyzes the transfer of a methyl group from 5-methyltetrahydrofolate to homocysteine resulting in methionine formation. The polypeptide is 5-methyltetrahydropteroyltriglutamate--homocysteine methyltransferase (Burkholderia mallei (strain NCTC 10247)).